Here is a 357-residue protein sequence, read N- to C-terminus: N-acetyl-gamma-glutamyl-phosphate reductase (357 aa).

The active site involves cysteine 151.

Belongs to the NAGSA dehydrogenase family. Type 1 subfamily.

The protein localises to the cytoplasm. It carries out the reaction N-acetyl-L-glutamate 5-semialdehyde + phosphate + NADP(+) = N-acetyl-L-glutamyl 5-phosphate + NADPH + H(+). Its pathway is amino-acid biosynthesis; L-arginine biosynthesis; N(2)-acetyl-L-ornithine from L-glutamate: step 3/4. Functionally, catalyzes the NADPH-dependent reduction of N-acetyl-5-glutamyl phosphate to yield N-acetyl-L-glutamate 5-semialdehyde. The protein is N-acetyl-gamma-glutamyl-phosphate reductase of Corynebacterium kroppenstedtii (strain DSM 44385 / JCM 11950 / CIP 105744 / CCUG 35717).